The chain runs to 442 residues: Elongation factor 1-alpha (442 aa).

The 224-residue stretch at 6–229 (KPHMNLIVIG…ALDNLKPPSV (224 aa)) folds into the tr-type G domain. Residues 15–22 (GHVDHGKS) form a G1 region. 15-22 (GHVDHGKS) is a binding site for GTP. Position 22 (Ser22) interacts with Mg(2+). A G2 region spans residues 71–75 (GVTID). Residues 92–95 (DAPG) are G3. GTP is bound by residues 92-96 (DAPGH) and 154-157 (NKMD). Residues 154 to 157 (NKMD) form a G4 region. A G5 region spans residues 195 to 197 (SAW).

The protein belongs to the TRAFAC class translation factor GTPase superfamily. Classic translation factor GTPase family. EF-Tu/EF-1A subfamily.

It is found in the cytoplasm. The enzyme catalyses GTP + H2O = GDP + phosphate + H(+). GTP hydrolase that promotes the GTP-dependent binding of aminoacyl-tRNA to the A-site of ribosomes during protein biosynthesis. The sequence is that of Elongation factor 1-alpha from Ignicoccus hospitalis (strain KIN4/I / DSM 18386 / JCM 14125).